Consider the following 383-residue polypeptide: E3 ubiquitin-protein ligase SPL2 (383 aa).

At 1–14 (MSSPERALLNLLTD) the chain is on the cytoplasmic side. The chain crosses the membrane as a helical span at residues 15 to 35 (IALSFDGAILGLTLAVSAVGS). The Chloroplast intermembrane portion of the chain corresponds to 36-269 (ALKYASTNAA…MIEDLMEQTN (234 aa)). Residues 270–290 (FIFLGSVILGIVSVGILSYAA) form a helical membrane-spanning segment. The Cytoplasmic segment spans residues 291 to 383 (VRTWNKWKQW…IRGSMRVYYS (93 aa)). The segment at 331-370 (CVICVSRRRVPAFIPCGHVVCCRRCASTVERELNPKCPVC) adopts an RING-type zinc-finger fold.

Its subcellular location is the plastid. It is found in the chloroplast outer membrane. It catalyses the reaction S-ubiquitinyl-[E2 ubiquitin-conjugating enzyme]-L-cysteine + [acceptor protein]-L-lysine = [E2 ubiquitin-conjugating enzyme]-L-cysteine + N(6)-ubiquitinyl-[acceptor protein]-L-lysine.. Its pathway is protein modification; protein ubiquitination. Possesses E3 ubiquitin-protein ligase activity. This is E3 ubiquitin-protein ligase SPL2 from Arabidopsis thaliana (Mouse-ear cress).